The sequence spans 630 residues: Cytochrome B pre-mRNA-processing protein 2 (630 aa).

The protein localises to the mitochondrion. In terms of biological role, appears to be specifically required for the splicing of the terminal intron (bI5) of the cytochrome b pre-mRNA. Can also stimulates the splicing of the omega intron of the precursor of large ribosomal RNA. The protein is Cytochrome B pre-mRNA-processing protein 2 (CBP2) of Saccharomyces paradoxus (Yeast).